Here is a 425-residue protein sequence, read N- to C-terminus: Metacaspase-1 (425 aa).

The disordered stretch occupies residues 1 to 110 (MSYNSNPYNG…PQLPNTQTQS (110 aa)). Positions 13 to 28 (YPPYNTYTRPNYSPNN) are enriched in low complexity. Polar residues-rich tracts occupy residues 29-38 (GSQSNNTVHQ) and 88-110 (TGAN…QTQS). Residues His-214 and Cys-270 contribute to the active site.

Belongs to the peptidase C14B family.

Its subcellular location is the cytoplasm. The protein localises to the nucleus. In terms of biological role, involved in cell death (apoptosis). In Schizosaccharomyces pombe (strain 972 / ATCC 24843) (Fission yeast), this protein is Metacaspase-1 (pca1).